Consider the following 381-residue polypeptide: Succinyl-diaminopimelate desuccinylase (381 aa).

Residue H69 coordinates Zn(2+). D71 is a catalytic residue. D103 is a binding site for Zn(2+). E137 acts as the Proton acceptor in catalysis. Zn(2+) is bound by residues E138, E166, and H355.

It belongs to the peptidase M20A family. DapE subfamily. Homodimer. The cofactor is Zn(2+). It depends on Co(2+) as a cofactor.

It catalyses the reaction N-succinyl-(2S,6S)-2,6-diaminopimelate + H2O = (2S,6S)-2,6-diaminopimelate + succinate. It functions in the pathway amino-acid biosynthesis; L-lysine biosynthesis via DAP pathway; LL-2,6-diaminopimelate from (S)-tetrahydrodipicolinate (succinylase route): step 3/3. Catalyzes the hydrolysis of N-succinyl-L,L-diaminopimelic acid (SDAP), forming succinate and LL-2,6-diaminopimelate (DAP), an intermediate involved in the bacterial biosynthesis of lysine and meso-diaminopimelic acid, an essential component of bacterial cell walls. The protein is Succinyl-diaminopimelate desuccinylase of Rickettsia rickettsii (strain Iowa).